The chain runs to 205 residues: Protein GrpE (205 aa).

The tract at residues Lys-172–Ala-205 is disordered. Low complexity predominate over residues Pro-177–Ala-195.

Belongs to the GrpE family. In terms of assembly, homodimer.

It localises to the cytoplasm. Functionally, participates actively in the response to hyperosmotic and heat shock by preventing the aggregation of stress-denatured proteins, in association with DnaK and GrpE. It is the nucleotide exchange factor for DnaK and may function as a thermosensor. Unfolded proteins bind initially to DnaJ; upon interaction with the DnaJ-bound protein, DnaK hydrolyzes its bound ATP, resulting in the formation of a stable complex. GrpE releases ADP from DnaK; ATP binding to DnaK triggers the release of the substrate protein, thus completing the reaction cycle. Several rounds of ATP-dependent interactions between DnaJ, DnaK and GrpE are required for fully efficient folding. This Caulobacter sp. (strain K31) protein is Protein GrpE.